We begin with the raw amino-acid sequence, 207 residues long: Holliday junction branch migration complex subunit RuvA (207 aa).

Residues 1 to 64 form a domain I region; it reads MIGLINGQVQ…EDAQLLYGFI (64 aa). The segment at 65 to 143 is domain II; sequence DRKERDVFRQ…NIEVDSSHLE (79 aa). Positions 144–152 are flexible linker; the sequence is FAMQPAPIS. The segment at 153–207 is domain III; it reads AEGSIIAEVEGALISLGYKEREAQQAIKAAKSNGETFADTQSLLKATLQQFQSFK.

Belongs to the RuvA family. Homotetramer. Forms an RuvA(8)-RuvB(12)-Holliday junction (HJ) complex. HJ DNA is sandwiched between 2 RuvA tetramers; dsDNA enters through RuvA and exits via RuvB. An RuvB hexamer assembles on each DNA strand where it exits the tetramer. Each RuvB hexamer is contacted by two RuvA subunits (via domain III) on 2 adjacent RuvB subunits; this complex drives branch migration. In the full resolvosome a probable DNA-RuvA(4)-RuvB(12)-RuvC(2) complex forms which resolves the HJ.

The protein localises to the cytoplasm. Functionally, the RuvA-RuvB-RuvC complex processes Holliday junction (HJ) DNA during genetic recombination and DNA repair, while the RuvA-RuvB complex plays an important role in the rescue of blocked DNA replication forks via replication fork reversal (RFR). RuvA specifically binds to HJ cruciform DNA, conferring on it an open structure. The RuvB hexamer acts as an ATP-dependent pump, pulling dsDNA into and through the RuvAB complex. HJ branch migration allows RuvC to scan DNA until it finds its consensus sequence, where it cleaves and resolves the cruciform DNA. The sequence is that of Holliday junction branch migration complex subunit RuvA from Psychrobacter cryohalolentis (strain ATCC BAA-1226 / DSM 17306 / VKM B-2378 / K5).